The primary structure comprises 443 residues: L-seryl-tRNA(Sec) selenium transferase (443 aa).

Position 285 is an N6-(pyridoxal phosphate)lysine (Lys285).

This sequence belongs to the SelA family. Pyridoxal 5'-phosphate serves as cofactor.

The protein resides in the cytoplasm. It catalyses the reaction L-seryl-tRNA(Sec) + selenophosphate + H(+) = L-selenocysteinyl-tRNA(Sec) + phosphate. Its pathway is aminoacyl-tRNA biosynthesis; selenocysteinyl-tRNA(Sec) biosynthesis; selenocysteinyl-tRNA(Sec) from L-seryl-tRNA(Sec) (bacterial route): step 1/1. In terms of biological role, converts seryl-tRNA(Sec) to selenocysteinyl-tRNA(Sec) required for selenoprotein biosynthesis. This Campylobacter lari (strain RM2100 / D67 / ATCC BAA-1060) protein is L-seryl-tRNA(Sec) selenium transferase.